A 208-amino-acid polypeptide reads, in one-letter code: Uracil phosphoribosyltransferase (208 aa).

5-phospho-alpha-D-ribose 1-diphosphate-binding positions include R78, R103, and 130 to 138 (DPMLATGGS). Uracil is bound by residues I193 and 198–200 (GDA). D199 contacts 5-phospho-alpha-D-ribose 1-diphosphate.

The protein belongs to the UPRTase family. Mg(2+) serves as cofactor.

The catalysed reaction is UMP + diphosphate = 5-phospho-alpha-D-ribose 1-diphosphate + uracil. It functions in the pathway pyrimidine metabolism; UMP biosynthesis via salvage pathway; UMP from uracil: step 1/1. With respect to regulation, allosterically activated by GTP. In terms of biological role, catalyzes the conversion of uracil and 5-phospho-alpha-D-ribose 1-diphosphate (PRPP) to UMP and diphosphate. In Shewanella woodyi (strain ATCC 51908 / MS32), this protein is Uracil phosphoribosyltransferase.